Here is a 257-residue protein sequence, read N- to C-terminus: Imidazole glycerol phosphate synthase subunit HisF (257 aa).

Active-site residues include Asp11 and Asp130.

This sequence belongs to the HisA/HisF family. Heterodimer of HisH and HisF.

Its subcellular location is the cytoplasm. The enzyme catalyses 5-[(5-phospho-1-deoxy-D-ribulos-1-ylimino)methylamino]-1-(5-phospho-beta-D-ribosyl)imidazole-4-carboxamide + L-glutamine = D-erythro-1-(imidazol-4-yl)glycerol 3-phosphate + 5-amino-1-(5-phospho-beta-D-ribosyl)imidazole-4-carboxamide + L-glutamate + H(+). The protein operates within amino-acid biosynthesis; L-histidine biosynthesis; L-histidine from 5-phospho-alpha-D-ribose 1-diphosphate: step 5/9. Functionally, IGPS catalyzes the conversion of PRFAR and glutamine to IGP, AICAR and glutamate. The HisF subunit catalyzes the cyclization activity that produces IGP and AICAR from PRFAR using the ammonia provided by the HisH subunit. The sequence is that of Imidazole glycerol phosphate synthase subunit HisF from Pseudoalteromonas atlantica (strain T6c / ATCC BAA-1087).